A 353-amino-acid chain; its full sequence is Photosystem II protein D1 (353 aa).

Residue threonine 2 is modified to N-acetylthreonine. At threonine 2 the chain carries Phosphothreonine. A run of 3 helical transmembrane segments spans residues 29–46 (YIGWFGVLMIPTLLTATS), 118–133 (HFFIGICSYMGREWEL), and 142–156 (WIAVAYSAPVAAATA). Histidine 118 is a chlorophyll a binding site. Tyrosine 126 is a pheophytin a binding site. Aspartate 170 and glutamate 189 together coordinate [CaMn4O5] cluster. A helical membrane pass occupies residues 197–218 (FHMLGVAGVFGGSLFSAMHGSL). Histidine 198 lines the chlorophyll a pocket. Residues histidine 215 and 264-265 (SF) each bind a quinone. Residue histidine 215 participates in Fe cation binding. Histidine 272 is a Fe cation binding site. Residues 274-288 (FLAIWPVMGIWFTAL) form a helical membrane-spanning segment. [CaMn4O5] cluster-binding residues include histidine 332, glutamate 333, aspartate 342, and alanine 344. The propeptide occupies 345–353 (SVEAPSINA).

The protein belongs to the reaction center PufL/M/PsbA/D family. In terms of assembly, PSII is composed of 1 copy each of membrane proteins PsbA, PsbB, PsbC, PsbD, PsbE, PsbF, PsbH, PsbI, PsbJ, PsbK, PsbL, PsbM, PsbT, PsbX, PsbY, PsbZ, Psb30/Ycf12, at least 3 peripheral proteins of the oxygen-evolving complex and a large number of cofactors. It forms dimeric complexes. Requires The D1/D2 heterodimer binds P680, chlorophylls that are the primary electron donor of PSII, and subsequent electron acceptors. It shares a non-heme iron and each subunit binds pheophytin, quinone, additional chlorophylls, carotenoids and lipids. D1 provides most of the ligands for the Mn4-Ca-O5 cluster of the oxygen-evolving complex (OEC). There is also a Cl(-1) ion associated with D1 and D2, which is required for oxygen evolution. The PSII complex binds additional chlorophylls, carotenoids and specific lipids. as cofactor. In terms of processing, tyr-161 forms a radical intermediate that is referred to as redox-active TyrZ, YZ or Y-Z. Post-translationally, C-terminally processed by CTPA; processing is essential to allow assembly of the oxygen-evolving complex and thus photosynthetic growth.

It is found in the plastid. The protein resides in the chloroplast thylakoid membrane. It catalyses the reaction 2 a plastoquinone + 4 hnu + 2 H2O = 2 a plastoquinol + O2. Its function is as follows. Photosystem II (PSII) is a light-driven water:plastoquinone oxidoreductase that uses light energy to abstract electrons from H(2)O, generating O(2) and a proton gradient subsequently used for ATP formation. It consists of a core antenna complex that captures photons, and an electron transfer chain that converts photonic excitation into a charge separation. The D1/D2 (PsbA/PsbD) reaction center heterodimer binds P680, the primary electron donor of PSII as well as several subsequent electron acceptors. The polypeptide is Photosystem II protein D1 (Ostreococcus tauri).